The primary structure comprises 99 residues: Nucleoid-associated protein EbfC (99 aa).

This sequence belongs to the YbaB/EbfC family. Homodimer.

The protein resides in the cytoplasm. The protein localises to the nucleoid. In terms of biological role, binds to DNA and alters its conformation. May be involved in regulation of gene expression, nucleoid organization and DNA protection. This chain is Nucleoid-associated protein EbfC, found in Borrelia duttonii (strain Ly).